A 522-amino-acid chain; its full sequence is GMP synthase [glutamine-hydrolyzing] (522 aa).

The 200-residue stretch at 5-204 (YILIIDFGSQ…VKNICNYTNV (200 aa)) folds into the Glutamine amidotransferase type-1 domain. The active-site Nucleophile is cysteine 82. Active-site residues include histidine 178 and glutamate 180. The GMPS ATP-PPase domain occupies 205-397 (IKYSLSIRKI…IGIPKEIIFR (193 aa)). Residue 232–238 (SGGIDSF) participates in ATP binding.

In terms of assembly, homodimer.

The enzyme catalyses XMP + L-glutamine + ATP + H2O = GMP + L-glutamate + AMP + diphosphate + 2 H(+). It functions in the pathway purine metabolism; GMP biosynthesis; GMP from XMP (L-Gln route): step 1/1. Its function is as follows. Catalyzes the synthesis of GMP from XMP. This Wigglesworthia glossinidia brevipalpis protein is GMP synthase [glutamine-hydrolyzing].